The primary structure comprises 367 residues: Phosphoribosylaminoimidazole-succinocarboxamide synthase (367 aa).

It belongs to the SAICAR synthetase family.

The enzyme catalyses 5-amino-1-(5-phospho-D-ribosyl)imidazole-4-carboxylate + L-aspartate + ATP = (2S)-2-[5-amino-1-(5-phospho-beta-D-ribosyl)imidazole-4-carboxamido]succinate + ADP + phosphate + 2 H(+). Its pathway is purine metabolism; IMP biosynthesis via de novo pathway; 5-amino-1-(5-phospho-D-ribosyl)imidazole-4-carboxamide from 5-amino-1-(5-phospho-D-ribosyl)imidazole-4-carboxylate: step 1/2. The sequence is that of Phosphoribosylaminoimidazole-succinocarboxamide synthase from Shewanella baltica (strain OS195).